Consider the following 186-residue polypeptide: Small ribosomal subunit protein uS19 (186 aa).

The segment at 1–95 is unknown; it reads MREAIKRYGS…YEELYAQYKQ (95 aa). A small ribosomal subunit protein uS19 region spans residues 96-186; sequence MTEKKAYVDP…EKTAKVVKKK (91 aa).

Belongs to the universal ribosomal protein uS19 family.

Functionally, protein S19 forms a complex with S13 that binds strongly to the 16S ribosomal RNA. The chain is Small ribosomal subunit protein uS19 from Aquifex aeolicus (strain VF5).